The following is a 529-amino-acid chain: Tyrosine-protein kinase Fgr (529 aa).

The N-myristoyl glycine moiety is linked to residue Gly-2. 2 S-palmitoyl cysteine lipidation sites follow: Cys-3 and Cys-6. Residue Tyr-34 is modified to Phosphotyrosine. The SH3 domain occupies 77-138 (IGVTLFIALY…PSNYVAPVDS (62 aa)). Residues 144–241 (WYFGKIGRKD…GLCNLLIAPC (98 aa)) enclose the SH2 domain. At Tyr-208 the chain carries Phosphotyrosine. A Phosphoserine modification is found at Ser-218. Residues 263 to 516 (ITLERRLGTG…YLQSFLEDYF (254 aa)) form the Protein kinase domain. Residues 269-277 (LGTGCFGDV) and Lys-291 each bind ATP. The active-site Proton acceptor is the Asp-382. The residue at position 412 (Tyr-412) is a Phosphotyrosine. Position 523 is a phosphotyrosine; by SRC (Tyr-523).

The protein belongs to the protein kinase superfamily. Tyr protein kinase family. SRC subfamily. Interacts with ITGB1, ITGB2, MS4A2/FCER1B, FCER1G, FCGR2A and/or FCGR2B. Interacts (via SH2 domain) with SYK (tyrosine phosphorylated). Interacts (via SH2 domain) with FLT3 (tyrosine phosphorylated). Interacts with PTK2/FAK1. Interacts (via SH2 domain) with HCLS1 (tyrosine phosphorylated by SYK). Interacts with SIRPA and PTPNS1. Interacts (not phosphorylated on tyrosine residues) with CBL; FGR tyrosine phosphorylation promotes dissociation. Interacts with PIK3R1 and FASLG. Interacts with CLNK. Post-translationally, ubiquitinated. Becomes ubiquitinated in response to ITGB2 signaling; this does not lead to degradation. In terms of processing, phosphorylated. Autophosphorylated on tyrosine residues. Becomes phosphorylated in response to FCGR2A and/or FCGR2B engagement, cell adhesion and signaling by ITGB2. Prior phosphorylation at Tyr-523 by SRC inhibits ulterior autophosphorylation at Tyr-412. As to expression, detected in neutrophils, monocytes and natural killer cells (at protein level). Detected in monocytes and large lymphocytes.

It is found in the cell membrane. The protein resides in the cell projection. The protein localises to the ruffle membrane. It localises to the cytoplasm. Its subcellular location is the cytosol. It is found in the cytoskeleton. The protein resides in the mitochondrion inner membrane. The protein localises to the mitochondrion intermembrane space. The enzyme catalyses L-tyrosyl-[protein] + ATP = O-phospho-L-tyrosyl-[protein] + ADP + H(+). Its activity is regulated as follows. Activated by autophosphorylation. Prior phosphorylation at Tyr-523 by SRC inhibits ulterior autophosphorylation at Tyr-412. Activated by phorbol myristate acetate, phosphatidic acid and poly-Lys. Binding (via SH2 domain) of HCLS1 that is already phosphorylated by SYK strongly increases kinase activity. Its function is as follows. Non-receptor tyrosine-protein kinase that transmits signals from cell surface receptors devoid of kinase activity and contributes to the regulation of immune responses, including neutrophil, monocyte, macrophage and mast cell functions, cytoskeleton remodeling in response to extracellular stimuli, phagocytosis, cell adhesion and migration. Promotes mast cell degranulation, release of inflammatory cytokines and IgE-mediated anaphylaxis. Acts downstream of receptors that bind the Fc region of immunoglobulins, such as MS4A2/FCER1B, FCGR2A and/or FCGR2B. Acts downstream of ITGB1 and ITGB2, and regulates actin cytoskeleton reorganization, cell spreading and adhesion. Depending on the context, activates or inhibits cellular responses. Functions as a negative regulator of ITGB2 signaling, phagocytosis and SYK activity in monocytes. Required for normal ITGB1 and ITGB2 signaling, normal cell spreading and adhesion in neutrophils and macrophages. Functions as a positive regulator of cell migration and regulates cytoskeleton reorganization via RAC1 activation. Phosphorylates SYK (in vitro) and promotes SYK-dependent activation of AKT1 and MAP kinase signaling. Phosphorylates PLD2 in antigen-stimulated mast cells, leading to PLD2 activation and the production of the signaling molecules lysophosphatidic acid and diacylglycerol. Promotes activation of PIK3R1. Phosphorylates FASLG, and thereby regulates its ubiquitination and subsequent internalization. Phosphorylates ABL1. Promotes phosphorylation of CBL, CTTN, PIK3R1, PTK2/FAK1, PTK2B/PYK2 and VAV2. Phosphorylates HCLS1 that has already been phosphorylated by SYK, but not unphosphorylated HCLS1. Together with CLNK, it acts as a negative regulator of natural killer cell-activating receptors and inhibits interferon-gamma production. In Homo sapiens (Human), this protein is Tyrosine-protein kinase Fgr (FGR).